The sequence spans 105 residues: Large ribosomal subunit protein uL24 (105 aa).

This sequence belongs to the universal ribosomal protein uL24 family. As to quaternary structure, part of the 50S ribosomal subunit.

In terms of biological role, one of two assembly initiator proteins, it binds directly to the 5'-end of the 23S rRNA, where it nucleates assembly of the 50S subunit. One of the proteins that surrounds the polypeptide exit tunnel on the outside of the subunit. In Saccharophagus degradans (strain 2-40 / ATCC 43961 / DSM 17024), this protein is Large ribosomal subunit protein uL24.